The following is a 194-amino-acid chain: ATP-dependent Clp protease proteolytic subunit (194 aa).

Catalysis depends on Ser-98, which acts as the Nucleophile. Residue His-123 is part of the active site.

The protein belongs to the peptidase S14 family. As to quaternary structure, fourteen ClpP subunits assemble into 2 heptameric rings which stack back to back to give a disk-like structure with a central cavity, resembling the structure of eukaryotic proteasomes.

Its subcellular location is the cytoplasm. The enzyme catalyses Hydrolysis of proteins to small peptides in the presence of ATP and magnesium. alpha-casein is the usual test substrate. In the absence of ATP, only oligopeptides shorter than five residues are hydrolyzed (such as succinyl-Leu-Tyr-|-NHMec, and Leu-Tyr-Leu-|-Tyr-Trp, in which cleavage of the -Tyr-|-Leu- and -Tyr-|-Trp bonds also occurs).. In terms of biological role, cleaves peptides in various proteins in a process that requires ATP hydrolysis. Has a chymotrypsin-like activity. Plays a major role in the degradation of misfolded proteins. The protein is ATP-dependent Clp protease proteolytic subunit of Clostridium botulinum (strain Hall / ATCC 3502 / NCTC 13319 / Type A).